The sequence spans 265 residues: Selenoprotein Pb (265 aa).

A signal peptide spans 1 to 18 (MQALWPLLLSALPALLGA). The N-linked (GlcNAc...) asparagine glycan is linked to Asn28. Position 64 (Sec64) is a non-standard amino acid, selenocysteine. N-linked (GlcNAc...) asparagine glycans are attached at residues Asn88, Asn178, Asn184, and Asn207. Residues 188–265 (SESSDSTKND…SHQEHVHNHR (78 aa)) are disordered. Polar residues predominate over residues 201 to 211 (ENNQRPNSTEP). Basic residues predominate over residues 215 to 231 (AHHHHHQQHEPHHHHHN). Over residues 239–265 (KSGDSDVTGKPKEPPHHSHQEHVHNHR) the composition is skewed to basic and acidic residues.

It is found in the secreted. Functionally, might be responsible for some of the extracellular antioxidant defense properties of selenium. This is Selenoprotein Pb (sepp1b) from Danio rerio (Zebrafish).